A 147-amino-acid polypeptide reads, in one-letter code: Deoxyuridine 5'-triphosphate nucleotidohydrolase (147 aa).

Residues 67–69 (RSG), Asn-80, and 84–86 (TID) contribute to the substrate site.

Belongs to the dUTPase family. Requires Mg(2+) as cofactor.

It catalyses the reaction dUTP + H2O = dUMP + diphosphate + H(+). The protein operates within pyrimidine metabolism; dUMP biosynthesis; dUMP from dCTP (dUTP route): step 2/2. Functionally, this enzyme is involved in nucleotide metabolism: it produces dUMP, the immediate precursor of thymidine nucleotides and it decreases the intracellular concentration of dUTP so that uracil cannot be incorporated into DNA. The sequence is that of Deoxyuridine 5'-triphosphate nucleotidohydrolase from Syntrophotalea carbinolica (strain DSM 2380 / NBRC 103641 / GraBd1) (Pelobacter carbinolicus).